We begin with the raw amino-acid sequence, 507 residues long: Rhamnogalacturonase A (507 aa).

The N-terminal stretch at 1 to 21 is a signal peptide; it reads MYVSRLLLFLAPLLVKGQLSG. An intrachain disulfide couples C38 to C64. The active-site Proton donor is the D215. C217 and C234 are oxidised to a cystine. N235 is a glycosylation site (N-linked (GlcNAc...) asparagine). H290 is a catalytic residue. A glycan (N-linked (GlcNAc...) asparagine) is linked at N317. Intrachain disulfides connect C340-C346 and C368-C377. The segment covering 462 to 491 has biased composition (low complexity); that stretch reads SPATSSPTATSTAISSVDPVSAATTTATSH. Positions 462-507 are disordered; the sequence is SPATSSPTATSTAISSVDPVSAATTTATSHGHGKSHHKHQCRAHRH. A compositionally biased stretch (basic residues) spans 492-507; the sequence is GHGKSHHKHQCRAHRH.

It belongs to the glycosyl hydrolase 28 family.

It is found in the secreted. It catalyses the reaction Endohydrolysis of alpha-D-GalA-(1-&gt;2)-alpha-L-Rha glycosidic bond in the rhamnogalacturonan I backbone with initial inversion of anomeric configuration releasing oligosaccharides with beta-D-GalA at the reducing end.. In terms of biological role, pectinolytic enzymes consist of four classes of enzymes: pectine lyase, polygalacturonase, pectin methylesterase and rhamnogalacturonase. Hydrolyzes alpha-D-galacturonopyranosyl-(1,2)-alpha-L-rhamnopyranosyl linkages in the backbone of the hairy regions of pectins. Active against linseed rhamnogalacturonan. This Emericella nidulans (strain FGSC A4 / ATCC 38163 / CBS 112.46 / NRRL 194 / M139) (Aspergillus nidulans) protein is Rhamnogalacturonase A (rhgA).